Here is a 167-residue protein sequence, read N- to C-terminus: Gem-associated protein 6 (167 aa).

A Sm domain is found at 7–74 (KGPLEWQDYI…VQTVETMNEG (68 aa)). In terms of domain architecture, AD spans 69-167 (ETMNEGDHRV…LIEGHLTASQ (99 aa)). Phosphoserine is present on residues Ser-95 and Ser-166.

Part of the core SMN complex that contains SMN1, GEMIN2/SIP1, DDX20/GEMIN3, GEMIN4, GEMIN5, GEMIN6, GEMIN7, GEMIN8 and STRAP/UNRIP. Part of the SMN-Sm complex that contains SMN1, GEMIN2/SIP1, DDX20/GEMIN3, GEMIN4, GEMIN5, GEMIN6, GEMIN7, GEMIN8, STRAP/UNRIP and the Sm proteins SNRPB, SNRPD1, SNRPD2, SNRPD3, SNRPE, SNRPF and SNRPG. Interacts with GEMIN7; the interaction is direct. Interacts with GEMIN8; the interaction is direct. Interacts with SNRPB, SNRPD2, SNRPD3 and SNRPE; the interaction is direct.

The protein resides in the nucleus. The protein localises to the nucleoplasm. It is found in the gem. Its subcellular location is the cytoplasm. The SMN complex catalyzes the assembly of small nuclear ribonucleoproteins (snRNPs), the building blocks of the spliceosome, and thereby plays an important role in the splicing of cellular pre-mRNAs. Most spliceosomal snRNPs contain a common set of Sm proteins SNRPB, SNRPD1, SNRPD2, SNRPD3, SNRPE, SNRPF and SNRPG that assemble in a heptameric protein ring on the Sm site of the small nuclear RNA to form the core snRNP (Sm core). In the cytosol, the Sm proteins SNRPD1, SNRPD2, SNRPE, SNRPF and SNRPG are trapped in an inactive 6S pICln-Sm complex by the chaperone CLNS1A that controls the assembly of the core snRNP. To assemble core snRNPs, the SMN complex accepts the trapped 5Sm proteins from CLNS1A forming an intermediate. Binding of snRNA inside 5Sm triggers eviction of the SMN complex, thereby allowing binding of SNRPD3 and SNRPB to complete assembly of the core snRNP. This is Gem-associated protein 6 (GEMIN6) from Homo sapiens (Human).